The sequence spans 106 residues: Glutaredoxin-1 (106 aa).

A1 is modified (N-acetylalanine). A Glutaredoxin domain is found at 2 to 105 (QEFVNSKIQP…ARLKEMGALR (104 aa)). K8 is subject to N6-succinyllysine. 2 disulfides stabilise this stretch: C22–C25 and C78–C82.

This sequence belongs to the glutaredoxin family.

The protein resides in the cytoplasm. In terms of biological role, has a glutathione-disulfide oxidoreductase activity in the presence of NADPH and glutathione reductase. Reduces low molecular weight disulfides and proteins. This is Glutaredoxin-1 (GLRX) from Oryctolagus cuniculus (Rabbit).